Consider the following 209-residue polypeptide: Molybdenum cofactor guanylyltransferase (209 aa).

GTP contacts are provided by residues 16–18, K28, N56, D69, and D103; that span reads LAG. Position 103 (D103) interacts with Mg(2+).

The protein belongs to the MobA family. In terms of assembly, monomer. Mg(2+) serves as cofactor.

The protein resides in the cytoplasm. It carries out the reaction Mo-molybdopterin + GTP + H(+) = Mo-molybdopterin guanine dinucleotide + diphosphate. Transfers a GMP moiety from GTP to Mo-molybdopterin (Mo-MPT) cofactor (Moco or molybdenum cofactor) to form Mo-molybdopterin guanine dinucleotide (Mo-MGD) cofactor. In Rhizobium johnstonii (strain DSM 114642 / LMG 32736 / 3841) (Rhizobium leguminosarum bv. viciae), this protein is Molybdenum cofactor guanylyltransferase.